Here is a 393-residue protein sequence, read N- to C-terminus: Probable acetyl-CoA acyltransferase (393 aa).

The Acyl-thioester intermediate role is filled by cysteine 88. Active-site proton acceptor residues include histidine 349 and cysteine 378.

This sequence belongs to the thiolase-like superfamily. Thiolase family.

The protein localises to the cytoplasm. The enzyme catalyses 2 acetyl-CoA = acetoacetyl-CoA + CoA. In Staphylococcus aureus (strain MSSA476), this protein is Probable acetyl-CoA acyltransferase.